The sequence spans 773 residues: Beta-hexosaminidase B (773 aa).

A signal peptide spans Met-1–Ala-19. Cystine bridges form between Cys-46-Cys-53, Cys-389-Cys-397, and Cys-496-Cys-542. Glu-531 functions as the Proton donor in the catalytic mechanism.

This sequence belongs to the glycosyl hydrolase 20 family.

It carries out the reaction Hydrolysis of terminal non-reducing N-acetyl-D-hexosamine residues in N-acetyl-beta-D-hexosaminides.. The protein is Beta-hexosaminidase B (nag096) of Pseudoalteromonas piscicida.